Here is a 172-residue protein sequence, read N- to C-terminus: EPIDERMAL PATTERNING FACTOR-like protein 7 (172 aa).

The signal sequence occupies residues 1–27 (MDHVNPTLFHLKSLSIFTLTLLYISSP). Cystine bridges form between Cys-128–Cys-159, Cys-132–Cys-138, Cys-135–Cys-161, and Cys-147–Cys-153.

This sequence belongs to the plant cysteine rich small secretory peptide family. Epidermal patterning factor subfamily.

It localises to the secreted. Functionally, controls stomatal patterning. This chain is EPIDERMAL PATTERNING FACTOR-like protein 7, found in Arabidopsis thaliana (Mouse-ear cress).